The following is a 97-amino-acid chain: U-reduvitoxin-Pr11a (97 aa).

A signal peptide spans 1 to 20 (MKTALFLVFALAFIAVEGKM). Pacifastin domains follow at residues 22–59 (RACSKPGQTVLAPDGCNHCRCSEKGILMACTKMMCPPR) and 62–97 (EKSCKPGTTFKHKDGCNTCKCSDDGKNALCTSKLCL). Disulfide bonds link cysteine 24–cysteine 42, cysteine 37–cysteine 56, and cysteine 40–cysteine 51. The pro-Pro-Arg motif necessary for proteolytic processing stretch occupies residues 57-59 (PPR). 3 disulfides stabilise this stretch: cysteine 65/cysteine 82, cysteine 77/cysteine 96, and cysteine 80/cysteine 91.

The protein belongs to the protease inhibitor I19 family. As to expression, expressed by the venom gland.

The protein resides in the secreted. Inhibits trypsin activity and prophenoloxidase (PPO) activation, an enzyme essential for both clotting and insect innate immune responses. It does not inhibit activity of chymotrypsin and protease K, and has no effect on phenoloxidase (PO) activity. In Platymeris rhadamanthus (Red spot assassin bug), this protein is U-reduvitoxin-Pr11a.